Reading from the N-terminus, the 111-residue chain is UPF0145 protein BRADO6695 (111 aa).

This sequence belongs to the UPF0145 family.

The sequence is that of UPF0145 protein BRADO6695 from Bradyrhizobium sp. (strain ORS 278).